We begin with the raw amino-acid sequence, 198 residues long: Linker for activation of T-cells family member 2 (198 aa).

Residues 1-4 are Extracellular-facing; the sequence is MAQP. The helical; Signal-anchor for type III membrane protein transmembrane segment at 5 to 24 threads the bilayer; that stretch reads ELLWAAAGLMLLGVAVSACV. Residues Cys-23 and Cys-26 are each lipidated (S-palmitoyl cysteine). At 25–198 the chain is on the cytoplasmic side; that stretch reads RCQLYATKRG…PTIDAVVLSK (174 aa). A phosphotyrosine mark is found at Tyr-136, Tyr-155, and Tyr-184.

When phosphorylated, interacts with GRB2. Phosphorylated on tyrosines following cross-linking of BCR; which induces the recruitment of GRB2.

Its subcellular location is the cell membrane. Its function is as follows. Involved in BCR (B-cell antigen receptor)-mediated signaling in B-cells. May also be involved in FCER1 (high affinity immunoglobulin epsilon receptor)-mediated signaling in mast cells and FCGR1 (high affinity immunoglobulin gamma Fc receptor I)-mediated signaling in myeloid cells. Couples activation of these receptors and their associated kinases with distal intracellular events such as calcium mobilization through the recruitment of GRB2. This Gallus gallus (Chicken) protein is Linker for activation of T-cells family member 2 (LAT2).